The chain runs to 230 residues: Uracil phosphoribosyltransferase (230 aa).

A GTP-binding site is contributed by 38 to 42 (KGLVK). 5-phospho-alpha-D-ribose 1-diphosphate is bound by residues R87, R112, and 140–148 (DPMIATGST). Uracil contacts are provided by residues I204 and 209–211 (GDA). D210 is a 5-phospho-alpha-D-ribose 1-diphosphate binding site.

Belongs to the UPRTase family. The cofactor is Mg(2+).

The enzyme catalyses UMP + diphosphate = 5-phospho-alpha-D-ribose 1-diphosphate + uracil. It functions in the pathway pyrimidine metabolism; UMP biosynthesis via salvage pathway; UMP from uracil: step 1/1. Allosterically activated by GTP. Its function is as follows. Catalyzes the conversion of uracil and 5-phospho-alpha-D-ribose 1-diphosphate (PRPP) to UMP and diphosphate. The protein is Uracil phosphoribosyltransferase of Thermococcus kodakarensis (strain ATCC BAA-918 / JCM 12380 / KOD1) (Pyrococcus kodakaraensis (strain KOD1)).